The following is a 251-amino-acid chain: Short chain dehydrogenase gsfK (251 aa).

Residues Leu-14, Thr-33, Glu-60, Asn-88, and Lys-122 each coordinate NADP(+). Active-site proton donor residues include Ser-143 and Tyr-161. NADP(+) is bound by residues Tyr-161, Lys-165, Val-192, and Thr-194. The Lowers pKa of active site Tyr role is filled by Lys-165.

It belongs to the short-chain dehydrogenases/reductases (SDR) family.

Its pathway is secondary metabolite biosynthesis; terpenoid biosynthesis. Its function is as follows. Short chain dehydrogenase; part of the gene cluster that mediates the biosynthesis of griseofulvin, an important antifungal drug that has been in use for a long time for treating dermatophyte infections. The first step of the pathway is the formation of the heptaketide backbone by gsfA which is initiated by priming with acetyl-CoA, followed by sequential condensations of 6 malonyl-CoA units. The resulting benzophenone can undergo a spontaneous dehydration to form norlichexanthone. However, the true precursor for the griseofulvin biosynthesis is not norlichexanthone, but the heptaketide benzophenone that is O-methylated at 3-OH by gsfB to produce griseophenone D which is further methylated at 9-OH by gsfC to yield griseophenone C. Griseophenone C is then substrate of halogenase gsfI which is responsible for the regio-specific chlorination at the C13 position to form griseophenone B. The cytochrome P450 gsfF catalyzes the coupling of orcinol and phloroglucinol rings in griseophenone B to form desmethyl-dehydrogriseofulvin A which is further methylated at 5-OH by gsfD to yield dehydrogriseofulvin. Finally, gsfE performs stereospecific reduction of enone 18 of dehydrogriseofulvin to afford the final product griseofulvin. The exact role of gsfK within the pathway has not been identified yet. This is Short chain dehydrogenase gsfK from Penicillium aethiopicum.